The chain runs to 372 residues: Chemerin-like receptor 1 (372 aa).

The Extracellular segment spans residues M1–V39. N7 carries an N-linked (GlcNAc...) asparagine glycan. The helical transmembrane segment at F40–I62 threads the bilayer. Residues A63–T73 lie on the Cytoplasmic side of the membrane. Residues V74–T95 form a helical membrane-spanning segment. The Extracellular segment spans residues Y96–I112. C110 and C188 are joined by a disulfide. The helical transmembrane segment at S113–F133 threads the bilayer. The Cytoplasmic portion of the chain corresponds to D134 to R152. A helical transmembrane segment spans residues L153–V174. At F175–R223 the chain is on the extracellular side. Residue N191 is glycosylated (N-linked (GlcNAc...) asparagine). A helical transmembrane segment spans residues F224–F244. The Cytoplasmic segment spans residues K245–I260. A helical membrane pass occupies residues I261–L281. Residues E282–L299 are Extracellular-facing. The chain crosses the membrane as a helical span at residues A300–G319. The Cytoplasmic portion of the chain corresponds to H320–L372. S338 bears the Phosphoserine mark. Position 341 is a phosphothreonine (T341). 3 positions are modified to phosphoserine: S348, S351, and S357. The residue at position 371 (T371) is a Phosphothreonine.

This sequence belongs to the chemokine-like receptor (CMKLR) family. In terms of tissue distribution, high expression in heart and lung, low in small intestines, colon, kidney, liver, uterus and brain.

The protein resides in the cell membrane. In terms of biological role, receptor for the chemoattractant adipokine chemerin/RARRES2 and for the omega-3 fatty acid derived molecule resolvin E1. Interaction with RARRES2 initiates activation of G proteins G(i)/G(o) and beta-arrestin pathways inducing cellular responses via second messenger pathways such as intracellular calcium mobilization, phosphorylation of MAP kinases MAPK1/MAPK3 (ERK1/2), TYRO3, MAPK14/P38MAPK and PI3K leading to multifunctional effects, like, reduction of immune responses, enhancing of adipogenesis and angionesis. Resolvin E1 down-regulates cytokine production in macrophages by reducing the activation of MAPK1/3 (ERK1/2) and NF-kappa-B. Positively regulates adipogenesis and adipocyte metabolism. The protein is Chemerin-like receptor 1 (Cmklr1) of Rattus norvegicus (Rat).